Here is a 109-residue protein sequence, read N- to C-terminus: Spermidine export protein MdtI (109 aa).

4 helical membrane-spanning segments follow: residues 6-26, 36-56, 64-84, and 88-108; these read FYPIAFLILAVMLEIVANILL, WLGILSLLSVLGAFSALAQAV, AYALWGGFGIAATVAAGWILF, and LNYKGWIGLILLLAGMVMIKL.

Belongs to the drug/metabolite transporter (DMT) superfamily. Small multidrug resistance (SMR) (TC 2.A.7.1) family. MdtI subfamily. In terms of assembly, forms a complex with MdtJ.

Its subcellular location is the cell inner membrane. In terms of biological role, catalyzes the excretion of spermidine. This chain is Spermidine export protein MdtI, found in Yersinia pseudotuberculosis serotype O:1b (strain IP 31758).